Here is a 62-residue protein sequence, read N- to C-terminus: UPF0434 protein ABO_2103 (62 aa).

It belongs to the UPF0434 family.

The protein is UPF0434 protein ABO_2103 of Alcanivorax borkumensis (strain ATCC 700651 / DSM 11573 / NCIMB 13689 / SK2).